The primary structure comprises 558 residues: Potassium-transporting ATPase potassium-binding subunit (558 aa).

Helical transmembrane passes span 2-22 (LQGF…APLL), 66-86 (VSAA…ILMF), 135-155 (ALGF…IAFI), 177-197 (ILLP…VPET), 253-273 (LLET…YGIM), 280-300 (GWLI…IAAV), 327-347 (FGWV…CGAV), 354-374 (LMPP…IWGG), 378-398 (GTAY…LMVG), 413-433 (IVLA…PTAI), 482-502 (LSAS…LIFL), and 528-548 (GITA…ILVL).

It belongs to the KdpA family. The system is composed of three essential subunits: KdpA, KdpB and KdpC.

The protein localises to the cell inner membrane. Functionally, part of the high-affinity ATP-driven potassium transport (or Kdp) system, which catalyzes the hydrolysis of ATP coupled with the electrogenic transport of potassium into the cytoplasm. This subunit binds the periplasmic potassium ions and delivers the ions to the membrane domain of KdpB through an intramembrane tunnel. This Synechocystis sp. (strain ATCC 27184 / PCC 6803 / Kazusa) protein is Potassium-transporting ATPase potassium-binding subunit.